The primary structure comprises 226 residues: Killer cell lectin-like receptor subfamily E member 1 (226 aa).

The tract at residues 1-28 (MDEAPVTRSTLNVNSQQKSKAKNKIKNT) is disordered. The Cytoplasmic portion of the chain corresponds to 1–68 (MDEAPVTRST…GKGNCSPPWR (68 aa)). Polar residues predominate over residues 7-18 (TRSTLNVNSQQK). The chain crosses the membrane as a helical; Signal-anchor for type II membrane protein span at residues 69–89 (LLSSVLGAMCLLLMAVAMVMT). Residues 90 to 226 (TFTTKSSSER…ANKLTYICKK (137 aa)) are Extracellular-facing. Intrachain disulfides connect cysteine 113–cysteine 124, cysteine 141–cysteine 224, and cysteine 202–cysteine 216. Residues 120-225 (FRCSCYFFSK…CANKLTYICK (106 aa)) enclose the C-type lectin domain. An N-linked (GlcNAc...) asparagine glycan is attached at asparagine 145.

As to quaternary structure, heterodimer; with KLRI1 or KLRI2. Expressed in natural killer (NK) cells (at protein level). Also detected in natural killer T (NKT) cells (at protein level). Has little or no expression in T cells (at protein level).

It is found in the cell membrane. Lectin-like receptor for natural killer (NK) cells. Can either inhibit or activate NK cell cytotoxic activity, depending on its binding partner. Heterodimer formation with KLRI1 mediates NK cell inhibition whereas heterodimer formation with KLRI2 mediates NK cell activation. Plays a role in allogeneic recognition by the immune system. The protein is Killer cell lectin-like receptor subfamily E member 1 of Mus musculus (Mouse).